Consider the following 482-residue polypeptide: Protein farnesyltransferase subunit beta (482 aa).

PFTB repeat units lie at residues 131–172, 182–223, 230–271, and 278–319; these read ESNA…VTLG, REKM…SILN, TQGL…ILIN, and LDSL…VLLQ. (2E,6E)-farnesyl diphosphate-binding positions include 256–259 and 298–301; these read HGGY and RTNK. Zn(2+) is bound by residues aspartate 304 and cysteine 306. 307 to 310 is a binding site for (2E,6E)-farnesyl diphosphate; sequence YTFW. The interval 329-372 is disordered; that stretch reads VHGSSHISEGTNEEHHAHDEDDLEDSDDDDDSDEDNDEDSVNGH. The segment covering 348 to 368 has biased composition (acidic residues); it reads EDDLEDSDDDDDSDEDNDEDS. The stretch at 391 to 433 is one PFTB 5 repeat; sequence SLGLQRYVLLCSKIPDGGFRDKPRKPRDFYHTCYCLSGLSVAQ. Histidine 421 lines the Zn(2+) pocket.

This sequence belongs to the protein prenyltransferase subunit beta family. Heterodimer of FTA and FTB (farnesyltransferase). Heterodimer of an alpha and a beta subunit. Zn(2+) is required as a cofactor.

The catalysed reaction is L-cysteinyl-[protein] + (2E,6E)-farnesyl diphosphate = S-(2E,6E)-farnesyl-L-cysteinyl-[protein] + diphosphate. Its function is as follows. Catalyzes the transfer of a farnesyl moiety from farnesyl diphosphate to a cysteine at the fourth position from the C-terminus of several proteins having the C-terminal sequence Cys-aliphatic-aliphatic-X (CaaX). The beta subunit is responsible for peptide-binding. Acts as an abscisic acid (ABA) negative regulator by mediating ASG2 farnesylation and consequently monitoring its subcellular localization. Involved in responses to salt (NaCl) and osmotic (e.g. in response to mannitol and PEG) stresses. The protein is Protein farnesyltransferase subunit beta (FTB) of Arabidopsis thaliana (Mouse-ear cress).